A 158-amino-acid polypeptide reads, in one-letter code: Small ribosomal subunit protein uS9 (158 aa).

The span at 1–20 (MSETMQSLDQLSALKTTQPD) shows a compositional bias: polar residues. Residues 1–29 (MSETMQSLDQLSALKTTQPDAPTYTKKVD) are disordered.

It belongs to the universal ribosomal protein uS9 family.

This Rhodopseudomonas palustris (strain BisB5) protein is Small ribosomal subunit protein uS9.